A 140-amino-acid polypeptide reads, in one-letter code: Envelope protein A28 homolog (140 aa).

The chain crosses the membrane as a helical; Signal-anchor for type II membrane protein span at residues 1–21 (MNAITIFFIILSTVAVCIIIF). Residues 22–140 (QLYSIYLNYD…KECIFLKSMF (119 aa)) lie on the Virion surface side of the membrane.

Belongs to the poxviridae A28 protein family. Post-translationally, contains two intramolecular disulfide bonds. They are created by the viral disulfide bond formation pathway, a poxvirus-specific pathway that operates on the cytoplasmic side of the MV membranes.

Its subcellular location is the virion membrane. Its function is as follows. Envelope protein required for virus entry into host cell and for cell-cell fusion (syncytium formation). This chain is Envelope protein A28 homolog, found in Bos taurus (Bovine).